The sequence spans 78 residues: Large ribosomal subunit protein bL28 (78 aa).

It belongs to the bacterial ribosomal protein bL28 family.

This chain is Large ribosomal subunit protein bL28, found in Prochlorococcus marinus (strain MIT 9211).